Reading from the N-terminus, the 122-residue chain is Large ribosomal subunit protein bL12 (122 aa).

Belongs to the bacterial ribosomal protein bL12 family. Homodimer. Part of the ribosomal stalk of the 50S ribosomal subunit. Forms a multimeric L10(L12)X complex, where L10 forms an elongated spine to which 2 to 4 L12 dimers bind in a sequential fashion. Binds GTP-bound translation factors.

Forms part of the ribosomal stalk which helps the ribosome interact with GTP-bound translation factors. Is thus essential for accurate translation. In Streptococcus sanguinis (strain SK36), this protein is Large ribosomal subunit protein bL12.